The following is a 114-amino-acid chain: MDMLLLVLVCLLTCSGQMLQKQAVISWQRQPCSHWQKLFSPWLIASVVALGSGMLLWIYLLQRLPLSMAYPMLSINLVLVLIGSRLFFHEQISYHNWLGAGAIIIGALLLGGLL.

3 consecutive transmembrane segments (helical) span residues 41–61 (PWLI…IYLL), 64–84 (LPLS…LIGS), and 94–114 (YHNW…GGLL). Residues 53-112 (GMLLWIYLLQRLPLSMAYPMLSINLVLVLIGSRLFFHEQISYHNWLGAGAIIIGALLLGG) form the EamA domain.

This sequence belongs to the ArnE family. In terms of assembly, heterodimer of ArnE and ArnF.

Its subcellular location is the cell inner membrane. Its pathway is bacterial outer membrane biogenesis; lipopolysaccharide biosynthesis. Translocates 4-amino-4-deoxy-L-arabinose-phosphoundecaprenol (alpha-L-Ara4N-phosphoundecaprenol) from the cytoplasmic to the periplasmic side of the inner membrane. The polypeptide is Probable 4-amino-4-deoxy-L-arabinose-phosphoundecaprenol flippase subunit ArnE (Aeromonas salmonicida (strain A449)).